Reading from the N-terminus, the 586-residue chain is UvrABC system protein C (586 aa).

Positions 17 to 94 (HKPGCYLWKD…IKQYKPRFNL (78 aa)) constitute a GIY-YIG domain. Residues 201-236 (EQVLNHLQQQEIKASEQQNFEAARHFLDLQKAVLEL) enclose the UVR domain.

This sequence belongs to the UvrC family. In terms of assembly, interacts with UvrB in an incision complex.

Its subcellular location is the cytoplasm. Functionally, the UvrABC repair system catalyzes the recognition and processing of DNA lesions. UvrC both incises the 5' and 3' sides of the lesion. The N-terminal half is responsible for the 3' incision and the C-terminal half is responsible for the 5' incision. The chain is UvrABC system protein C from Mycoplasma pneumoniae (strain ATCC 29342 / M129 / Subtype 1) (Mycoplasmoides pneumoniae).